The sequence spans 603 residues: Pyruvate oxidase (603 aa).

Positions 1–191 are core; the sequence is MVMKQTKQTN…WYASANSYQT (191 aa). An FAD-binding region spans residues 192 to 342; that stretch reads PLLPEPDVQA…ILAQVSERES (151 aa). The thiamine pyrophosphate binding stretch occupies residues 343–603; sequence TPWWQANLAN…LQHQIGQGGF (261 aa). Positions 447, 474, and 476 each coordinate Mg(2+).

The protein belongs to the TPP enzyme family. Homotetramer. Requires FAD as cofactor. The cofactor is Mg(2+). Thiamine diphosphate serves as cofactor.

The enzyme catalyses pyruvate + phosphate + O2 + H(+) = acetyl phosphate + H2O2 + CO2. Functionally, important for the aerobic growth. Decarboxylates pyruvate in four steps. The energy released is partially stored in acetyl phosphate. The polypeptide is Pyruvate oxidase (pox5) (Lactiplantibacillus plantarum (strain ATCC BAA-793 / NCIMB 8826 / WCFS1) (Lactobacillus plantarum)).